A 380-amino-acid polypeptide reads, in one-letter code: Cytochrome b (380 aa).

A run of 4 helical transmembrane segments spans residues 33-53 (FGSL…FLAM), 77-98 (WLIR…YLHV), 113-133 (WNIG…GYVL), and 178-198 (FFAF…IHLL). His-83 and His-97 together coordinate heme b. Residues His-182 and His-196 each coordinate heme b. His-201 lines the a ubiquinone pocket. Transmembrane regions (helical) follow at residues 226 to 246 (YKDL…ALFS), 288 to 308 (LGGV…PMLH), 320 to 340 (PSQI…WIGG), and 347 to 367 (FVLI…IALP).

This sequence belongs to the cytochrome b family. As to quaternary structure, the cytochrome bc1 complex contains 3 respiratory subunits (MT-CYB, CYC1 and UQCRFS1), 2 core proteins (UQCRC1 and UQCRC2) and probably 6 low-molecular weight proteins. The cofactor is heme b.

It is found in the mitochondrion inner membrane. Functionally, component of the ubiquinol-cytochrome c reductase complex (complex III or cytochrome b-c1 complex) that is part of the mitochondrial respiratory chain. The b-c1 complex mediates electron transfer from ubiquinol to cytochrome c. Contributes to the generation of a proton gradient across the mitochondrial membrane that is then used for ATP synthesis. This is Cytochrome b (mt-cyb) from Acipenser sinensis (Chinese sturgeon).